Consider the following 467-residue polypeptide: Membrane-bound lytic murein transglycosylase F (467 aa).

An N-terminal signal peptide occupies residues 1 to 33 (MTELFRHSKHLLASLALLSVLGLMLAMHPSPSA). The interval 34–266 (IERIMARGEL…KLEDRFYGHV (233 aa)) is non-LT domain. The segment at 268 to 467 (QFNLYAARSF…RRDDTLIALN (200 aa)) is LT domain. The active site involves E313.

It in the N-terminal section; belongs to the bacterial solute-binding protein 3 family. The protein in the C-terminal section; belongs to the transglycosylase Slt family.

The protein localises to the cell outer membrane. It carries out the reaction Exolytic cleavage of the (1-&gt;4)-beta-glycosidic linkage between N-acetylmuramic acid (MurNAc) and N-acetylglucosamine (GlcNAc) residues in peptidoglycan, from either the reducing or the non-reducing ends of the peptidoglycan chains, with concomitant formation of a 1,6-anhydrobond in the MurNAc residue.. In terms of biological role, murein-degrading enzyme that degrades murein glycan strands and insoluble, high-molecular weight murein sacculi, with the concomitant formation of a 1,6-anhydromuramoyl product. Lytic transglycosylases (LTs) play an integral role in the metabolism of the peptidoglycan (PG) sacculus. Their lytic action creates space within the PG sacculus to allow for its expansion as well as for the insertion of various structures such as secretion systems and flagella. In Alcanivorax borkumensis (strain ATCC 700651 / DSM 11573 / NCIMB 13689 / SK2), this protein is Membrane-bound lytic murein transglycosylase F.